A 66-amino-acid polypeptide reads, in one-letter code: Phylloseptin-S4 (66 aa).

The N-terminal stretch at 1–22 is a signal peptide; it reads MAFLKKSLFLVLFLGLVSLSIC. A propeptide spanning residues 23 to 46 is cleaved from the precursor; it reads EEEKRETEEEEHDQEEDDKSEEKR. The tract at residues 25–44 is disordered; that stretch reads EKRETEEEEHDQEEDDKSEE. Residues 30–41 show a composition bias toward acidic residues; it reads EEEEHDQEEDDK. Residue L65 is modified to Leucine amide.

In terms of tissue distribution, expressed by the skin glands.

The protein localises to the secreted. The protein resides in the target cell membrane. Antimicrobial peptide with high activity against Gram-positive bacteria, moderate activity against Gram-negative bacteria, and moderate activity against fungi. Acts by causing bacterial membrane disruption inducing leakage of the intracellular content followed by cell death. It adopts an alpha-helical amphipathic structure in membrane environments. Also shows highly potent antiparasitic activity against Leishmania species. Shows moderate hemolytic activity on human erythrocytes (LC(50)=33 uM). Is also active on human monocytes (IC(50)=23 uM). In Phyllomedusa sauvagei (Sauvage's leaf frog), this protein is Phylloseptin-S4.